The primary structure comprises 184 residues: Regulatory protein RecX (184 aa).

The disordered stretch occupies residues 1–21 (MTLFPLPSTSDPAEADESTKR).

The protein belongs to the RecX family.

It localises to the cytoplasm. Modulates RecA activity. In Mycolicibacterium vanbaalenii (strain DSM 7251 / JCM 13017 / BCRC 16820 / KCTC 9966 / NRRL B-24157 / PYR-1) (Mycobacterium vanbaalenii), this protein is Regulatory protein RecX.